The primary structure comprises 922 residues: Lysine-specific demethylase 4 (922 aa).

Polar residues predominate over residues 1 to 15; it reads MASAATTTHFPSSRI. Disordered stretches follow at residues 1 to 21 and 42 to 61; these read MASA…EPCA and SSSC…MFTD. One can recognise a JmjN domain in the interval 87–130; the sequence is VLTFYPTMREFKNFSQYIKKIEQNGGHLKAGIAKIVAPEGWTPR. A 2-oxoglutarate-binding site is contributed by Tyr-213. The region spanning 223–388 is the JmjC domain; sequence DAQVEEWNMN…YGKDAVLCDC (166 aa). The Fe cation site is built by His-265 and Glu-267. 2-oxoglutarate-binding residues include Asn-275 and Lys-283. Zn(2+) contacts are provided by Cys-314 and His-320. 2-oxoglutarate is bound at residue Lys-321. Residue His-356 participates in Fe cation binding. The Zn(2+) site is built by Cys-386 and Cys-388. A disordered region spans residues 435–475; sequence KRRQSLADASKIAKRARLGASSTATDSDGSSGSSGSEEATE. The segment covering 453–475 has biased composition (low complexity); sequence GASSTATDSDGSSGSSGSEEATE. The C2HC pre-PHD-type zinc finger occupies 639–675; it reads TTSCQLCELRGGALIPCQIGTDSTWAHVACALFNRRA. The PHD-type; degenerate zinc finger occupies 723-783; sequence WECVVCHRTD…GVVMICHKHE (61 aa).

Belongs to the JHDM3 histone demethylase family. Fe(2+) is required as a cofactor.

Its subcellular location is the nucleus. It carries out the reaction N(6),N(6),N(6)-trimethyl-L-lysyl(9)-[histone H3] + 2 2-oxoglutarate + 2 O2 = N(6)-methyl-L-lysyl(9)-[histone H3] + 2 formaldehyde + 2 succinate + 2 CO2. The catalysed reaction is N(6),N(6),N(6)-trimethyl-L-lysyl(36)-[histone H3] + 2 2-oxoglutarate + 2 O2 = N(6)-methyl-L-lysyl(36)-[histone H3] + 2 formaldehyde + 2 succinate + 2 CO2. Functionally, histone demethylase that specifically demethylates 'Lys-9' and 'Lys-36' residues of histone H3, thereby playing a central role in histone code. Demethylation of Lys residue generates formaldehyde and succinate. Involved in the negative regulation of lifespan in a germline-dependent fashion. The polypeptide is Lysine-specific demethylase 4 (jmjd-2) (Caenorhabditis elegans).